Reading from the N-terminus, the 205-residue chain is Histidine biosynthesis bifunctional protein HisIE (205 aa).

The phosphoribosyl-AMP cyclohydrolase stretch occupies residues 1-115 (MIDIKELKFD…DEETEDGIEI (115 aa)). A phosphoribosyl-ATP pyrophosphohydrolase region spans residues 116-205 (LNKLYERIKG…YNELERRYKK (90 aa)).

It in the N-terminal section; belongs to the PRA-CH family. The protein in the C-terminal section; belongs to the PRA-PH family.

It is found in the cytoplasm. It carries out the reaction 1-(5-phospho-beta-D-ribosyl)-ATP + H2O = 1-(5-phospho-beta-D-ribosyl)-5'-AMP + diphosphate + H(+). It catalyses the reaction 1-(5-phospho-beta-D-ribosyl)-5'-AMP + H2O = 1-(5-phospho-beta-D-ribosyl)-5-[(5-phospho-beta-D-ribosylamino)methylideneamino]imidazole-4-carboxamide. The protein operates within amino-acid biosynthesis; L-histidine biosynthesis; L-histidine from 5-phospho-alpha-D-ribose 1-diphosphate: step 2/9. It participates in amino-acid biosynthesis; L-histidine biosynthesis; L-histidine from 5-phospho-alpha-D-ribose 1-diphosphate: step 3/9. This chain is Histidine biosynthesis bifunctional protein HisIE, found in Caldanaerobacter subterraneus subsp. tengcongensis (strain DSM 15242 / JCM 11007 / NBRC 100824 / MB4) (Thermoanaerobacter tengcongensis).